Consider the following 477-residue polypeptide: PTS system glucose-specific EIICB component (477 aa).

Residues 1-388 (MFKNVFANLQ…FNLDTPGREN (388 aa)) enclose the PTS EIIC type-1 domain. 10 helical membrane-spanning segments follow: residues 15–35 (SLML…IGSA), 51–71 (TGGS…ALGF), 76–96 (GVAA…LTAV), 112–132 (HLSD…AYMF), 152–172 (FVPI…SLIW), 191–211 (PILA…FGLH), 250–270 (LSGG…AIWH), 280–300 (IGSI…TEPI), 304–324 (FIIV…LSFP), and 357–377 (FPII…LFII). The PTS EIIB type-1 domain maps to 399 to 477 (NEIAPYIITA…TAMDECIKNI (79 aa)). C421 functions as the Phosphocysteine intermediate; for EIIB activity in the catalytic mechanism. C421 carries the phosphocysteine modification.

Its subcellular location is the cell inner membrane. The enzyme catalyses N(pros)-phospho-L-histidyl-[protein] + D-glucose(out) = D-glucose 6-phosphate(in) + L-histidyl-[protein]. In terms of biological role, the phosphoenolpyruvate-dependent sugar phosphotransferase system (sugar PTS), a major carbohydrate active transport system, catalyzes the phosphorylation of incoming sugar substrates concomitantly with their translocation across the cell membrane. The enzyme II complex composed of PtsG and Crr is involved in glucose transport. This Buchnera aphidicola subsp. Acyrthosiphon pisum (strain APS) (Acyrthosiphon pisum symbiotic bacterium) protein is PTS system glucose-specific EIICB component (ptsG).